A 211-amino-acid polypeptide reads, in one-letter code: LexA repressor (211 aa).

The segment at residues 30 to 50 (RVEIAREIGFKSPNAAEEHLK) is a DNA-binding region (H-T-H motif). Catalysis depends on for autocatalytic cleavage activity residues Ser128 and Lys165.

Belongs to the peptidase S24 family. Homodimer.

The catalysed reaction is Hydrolysis of Ala-|-Gly bond in repressor LexA.. Functionally, represses a number of genes involved in the response to DNA damage (SOS response), including recA and lexA. In the presence of single-stranded DNA, RecA interacts with LexA causing an autocatalytic cleavage which disrupts the DNA-binding part of LexA, leading to derepression of the SOS regulon and eventually DNA repair. The chain is LexA repressor from Haemophilus ducreyi (strain 35000HP / ATCC 700724).